Consider the following 800-residue polypeptide: U4/U6.U5 tri-snRNP-associated protein 1 (800 aa).

A disordered region spans residues 1–120 (MGSSKKHRGE…SSGDASSLSI (120 aa)). Residues 32–42 (HREHKKHKHRS) are compositionally biased toward basic residues. Positions 58-101 (ERGGERGSGRRGAEAEARSSTHGRERSQAEPSERRVKREKRDDG) are enriched in basic and acidic residues. Low complexity predominate over residues 104-119 (AAASSKTSSGDASSLS). Glycyl lysine isopeptide (Lys-Gly) (interchain with G-Cter in SUMO2) cross-links involve residues Lys-125 and Lys-133. Residue Lys-141 forms a Glycyl lysine isopeptide (Lys-Gly) (interchain with G-Cter in SUMO1); alternate linkage. Residue Lys-141 forms a Glycyl lysine isopeptide (Lys-Gly) (interchain with G-Cter in SUMO2); alternate linkage. Glycyl lysine isopeptide (Lys-Gly) (interchain with G-Cter in SUMO2) cross-links involve residues Lys-147 and Lys-188. A coiled-coil region spans residues 157–231 (NPMALRQREE…KLLEEMDQEF (75 aa)). Phosphothreonine is present on Thr-189. A Glycyl lysine isopeptide (Lys-Gly) (interchain with G-Cter in SUMO2) cross-link involves residue Lys-277. The disordered stretch occupies residues 311-330 (PDYLPYAEDESVDDLAQQKP). The residue at position 321 (Ser-321) is a Phosphoserine. Residues Lys-329 and Lys-336 each participate in a glycyl lysine isopeptide (Lys-Gly) (interchain with G-Cter in SUMO2) cross-link. Ser-348 carries the phosphoserine modification. The residue at position 392 (Thr-392) is a Phosphothreonine. Residues Lys-400 and Lys-414 each participate in a glycyl lysine isopeptide (Lys-Gly) (interchain with G-Cter in SUMO2) cross-link. The disordered stretch occupies residues 419-497 (RADDLLPLGD…QVLEEDEAEL (79 aa)). At Thr-430 the chain carries Phosphothreonine. Phosphoserine is present on residues Ser-448, Ser-474, Ser-486, and Ser-521. A coiled-coil region spans residues 490–533 (LEEDEAELELQKQLEKGRRLRQLQQLQQLRDSGEKVVEIVKKLE). Lys-548 participates in a covalent cross-link: Glycyl lysine isopeptide (Lys-Gly) (interchain with G-Cter in SUMO2). The segment at 571-604 (LAGNREEQEELMDFERDEERSANGGSESDGEENI) is disordered. Residues Ser-591, Ser-596, Ser-598, and Ser-621 each carry the phosphoserine modification. Glycyl lysine isopeptide (Lys-Gly) (interchain with G-Cter in SUMO2) cross-links involve residues Lys-648, Lys-657, and Lys-684. A Phosphothreonine modification is found at Thr-695. Glycyl lysine isopeptide (Lys-Gly) (interchain with G-Cter in SUMO2) cross-links involve residues Lys-699, Lys-709, Lys-723, Lys-749, and Lys-758. Residue Ser-761 is modified to Phosphoserine. At Thr-764 the chain carries Phosphothreonine. Glycyl lysine isopeptide (Lys-Gly) (interchain with G-Cter in SUMO2) cross-links involve residues Lys-775 and Lys-780. Ser-789 bears the Phosphoserine mark. A Glycyl lysine isopeptide (Lys-Gly) (interchain with G-Cter in SUMO2) cross-link involves residue Lys-791.

Belongs to the SNU66/SART1 family. As to quaternary structure, identified in the spliceosome C complex. Component of the U4/U6-U5 tri-snRNP complex composed of the U4, U6 and U5 snRNAs and at least PRPF3, PRPF4, PRPF6, PRPF8, PRPF31, SNRNP200, TXNL4A, SNRNP40, DDX23, CD2BP2, PPIH, SNU13, EFTUD2, SART1 and USP39. Interacts with UBL5. Interacts with IVNS1ABP (via Kelch repeats). Sumoylated with SUMO2. In terms of tissue distribution, ubiquitously expressed.

The protein resides in the nucleus. Plays a role in mRNA splicing as a component of the U4/U6-U5 tri-snRNP, one of the building blocks of the spliceosome. May also bind to DNA. This chain is U4/U6.U5 tri-snRNP-associated protein 1 (SART1), found in Homo sapiens (Human).